We begin with the raw amino-acid sequence, 568 residues long: Polyprotein P2A (568 aa).

A run of 2 helical transmembrane segments spans residues 10-30 and 41-61; these read KSVM…ISVA and TLIC…CAVC. Positions 129–326 constitute a Peptidase S39 domain; the sequence is VENSRLQPLE…TVENSELYPD (198 aa). Residues histidine 176, aspartate 209, and serine 276 each act as for protease activity in the active site. Position 339 is a phosphothreonine; by host (threonine 339). Serine 390 bears the Phosphoserine; by host mark. Disordered regions lie at residues 403-435 and 469-568; these read LNYQ…ESSI and SSQN…ATSK. Polar residues-rich tracts occupy residues 419-435 and 469-478; these read NLSS…ESSI and SSQNSKSSLG. Over residues 481–502 the composition is skewed to basic and acidic residues; it reads ADRKQKSDRSSSKPEGLKESKR. Over residues 507-516 the composition is skewed to polar residues; it reads NWQSLTSKPS. The segment covering 539 to 549 has biased composition (basic residues); that stretch reads KSKRSRTRGKS. Positions 554-568 are enriched in polar residues; that stretch reads VPASPSPKSGSATSK.

It localises to the host membrane. Responsible for cleavages of polyprotein P2A and replicase polyprotein P2AB. Functionally, covalently attached to the 5' extremity of the genomic and subgenomic RNAs. It may serve as a primer for the replicase. This is Polyprotein P2A from Cocksfoot mottle virus (isolate Dactylis glomerata/Norway/CfMV-NO/1995) (CfMV).